The chain runs to 530 residues: Growth-regulating factor 1 (530 aa).

Residues 1-41 (MDLGVRVSGHETVSSPGQTELGSGFSNKQERSGFDGEDCWR) form a disordered region. A compositionally biased stretch (polar residues) spans 11-27 (ETVSSPGQTELGSGFSN). Basic and acidic residues predominate over residues 28–41 (KQERSGFDGEDCWR). The region spanning 133–168 (PFSLTQWAELEQQALIYKYITANVPVPSSLLLSLKK) is the QLQ domain. The WRC domain occupies 196 to 240 (DPEPGRCRRTDGKKWRCSRDAVPDQKYCERHINRGRHRSRKPVEG). 2 short sequence motifs (bipartite nuclear localization signal) span residues 201–211 (RCRRTDGKKWR) and 229–236 (RGRHRSRK). Disordered stretches follow at residues 223-250 (CERH…NAAA) and 485-530 (STFG…APSL). Positions 485–508 (STFGSLSNSSSASSTIIGDNNNKN) are enriched in low complexity. Residues 519–530 (TLMNTSATAPSL) are compositionally biased toward polar residues.

It belongs to the GRF family. Interacts with GIF1 and GIF2. Strongly expressed in actively growing and developing tissues, such as roots, upper stems, and shoot tips containing the shoot apical meristem (SAM) and flower buds. Also expressed in mature flowers, but weakly expressed in mature stems and leaves.

It localises to the nucleus. Transcription activator that plays a role in the regulation of cell expansion in leaf and cotyledons tissues. Component of a network formed by miR396, the GRFs and their interacting factors (GIFs) acting in the regulation of meristem function, at least partially through the control of cell proliferation. microRNA396-GRF1/GRF3 regulatory module acts as a developmental regulator in the reprogramming of root cells during cyst nematode infection, leading to the formation of the syncytium. The protein is Growth-regulating factor 1 (GRF1) of Arabidopsis thaliana (Mouse-ear cress).